The primary structure comprises 541 residues: Ankyrin repeat domain-containing protein 13C (541 aa).

The segment covering 1 to 20 (MTGEKIRSLRRDHKPSKEEG) has biased composition (basic and acidic residues). The segment at 1–27 (MTGEKIRSLRRDHKPSKEEGDLLEPGD) is disordered. 3 ANK repeats span residues 111–142 (PAHY…QKDN), 143–172 (HGNT…PVKV), and 176–205 (QGWS…QQSR). Residue S411 is modified to Phosphoserine.

The protein localises to the endoplasmic reticulum membrane. Its function is as follows. Acts as a molecular chaperone for G protein-coupled receptors, regulating their biogenesis and exit from the ER. The protein is Ankyrin repeat domain-containing protein 13C (ANKRD13C) of Homo sapiens (Human).